Consider the following 393-residue polypeptide: MSLSLKRKDLMIVNMGPQHPSMHGVLRLIVTLDGEDVIDCEPILGYLHRGMEKIAENRSIIQYLPYVTRWDYLATMFTEAITVNAPEFLENIQIPKRASYIRVIMLELSRIASHLLWLGPFMADLGAQTPFFYIFRERELIYDLFEAVTGMRMMHNYFRIGGVAADLPYGWMDKCLDFCDYFLQGVVEYQELITQNPIFLERVEGVGFISGEEAVNWGLSGPMLRASGIQWDLRKIDPYESYNQFDWKVQWQKEGDSLARYLVRVGEMRESIKIIQQAVEKIPGGPYENLEARRFKKAKNPEWNDFEYRFLGKKPSPNFELSKQELYVRVEAPKGELGIYLVGDDSLFPWRWKIRPPGFINLQILPQLVKKMKLADIMTILGSIDIIMGEVDR.

The protein belongs to the complex I 49 kDa subunit family. NDH is composed of at least 16 different subunits, 5 of which are encoded in the nucleus.

It is found in the plastid. The protein localises to the chloroplast thylakoid membrane. It catalyses the reaction a plastoquinone + NADH + (n+1) H(+)(in) = a plastoquinol + NAD(+) + n H(+)(out). It carries out the reaction a plastoquinone + NADPH + (n+1) H(+)(in) = a plastoquinol + NADP(+) + n H(+)(out). Functionally, NDH shuttles electrons from NAD(P)H:plastoquinone, via FMN and iron-sulfur (Fe-S) centers, to quinones in the photosynthetic chain and possibly in a chloroplast respiratory chain. The immediate electron acceptor for the enzyme in this species is believed to be plastoquinone. Couples the redox reaction to proton translocation, and thus conserves the redox energy in a proton gradient. The polypeptide is NAD(P)H-quinone oxidoreductase subunit H, chloroplastic (Zea mays (Maize)).